The primary structure comprises 234 residues: UPF0441 protein plu3956 (234 aa).

2 disordered regions span residues 105–129 (QAGL…QQSG) and 149–234 (SAPS…SVGG). Low complexity predominate over residues 110–127 (TTTSSTSTNGEAQAQQQQ). Polar residues predominate over residues 150–175 (APSQPLFSSKSATSPANGQFVDSTGK). Composition is skewed to low complexity over residues 188–205 (TVPK…TTIT) and 216–234 (QSTM…SVGG).

It belongs to the UPF0441 family.

This is UPF0441 protein plu3956 from Photorhabdus laumondii subsp. laumondii (strain DSM 15139 / CIP 105565 / TT01) (Photorhabdus luminescens subsp. laumondii).